A 415-amino-acid chain; its full sequence is JmjC domain-containing protein C (415 aa).

Residues 97–140 (NEKNNQSNNNNNNNNNNNNNNNNNNNNNNNNNNNNNNNNNNKPK) are disordered. The span at 104-137 (NNNNNNNNNNNNNNNNNNNNNNNNNNNNNNNNNN) shows a compositional bias: low complexity. A JmjC domain is found at 127–302 (NNNNNNNNNN…ELLKSNKLWC (176 aa)).

This chain is JmjC domain-containing protein C (jcdC), found in Dictyostelium discoideum (Social amoeba).